The sequence spans 164 residues: MALNLQDKKAIVAEVNEAANGALSAVVADSRGVAVGAMTSLRKQARENGVYLKVVRNTLARRAVEGTDFECLKDVFVGPSLIGFSNEHPGAAARLFKDFAKENKDFEFKAAAFEGAVVDAEVLATLPTYDEAIARLMMCMKEASAGKLVRTIAAVRDQKEEAAA.

This sequence belongs to the universal ribosomal protein uL10 family. In terms of assembly, part of the ribosomal stalk of the 50S ribosomal subunit. The N-terminus interacts with L11 and the large rRNA to form the base of the stalk. The C-terminus forms an elongated spine to which L12 dimers bind in a sequential fashion forming a multimeric L10(L12)X complex.

Forms part of the ribosomal stalk, playing a central role in the interaction of the ribosome with GTP-bound translation factors. The sequence is that of Large ribosomal subunit protein uL10 from Photobacterium profundum (strain SS9).